A 138-amino-acid chain; its full sequence is Transcription antitermination protein NusB (138 aa).

This sequence belongs to the NusB family.

Its function is as follows. Involved in transcription antitermination. Required for transcription of ribosomal RNA (rRNA) genes. Binds specifically to the boxA antiterminator sequence of the ribosomal RNA (rrn) operons. The protein is Transcription antitermination protein NusB of Limosilactobacillus reuteri (strain DSM 20016) (Lactobacillus reuteri).